Consider the following 189-residue polypeptide: NADH-quinone oxidoreductase subunit B (189 aa).

[4Fe-4S] cluster contacts are provided by cysteine 39, cysteine 40, cysteine 104, and cysteine 135.

The protein belongs to the complex I 20 kDa subunit family. NDH-1 is composed of 14 different subunits. Subunits NuoB, C, D, E, F, and G constitute the peripheral sector of the complex. Requires [4Fe-4S] cluster as cofactor.

It is found in the cell inner membrane. It carries out the reaction a quinone + NADH + 5 H(+)(in) = a quinol + NAD(+) + 4 H(+)(out). Functionally, NDH-1 shuttles electrons from NADH, via FMN and iron-sulfur (Fe-S) centers, to quinones in the respiratory chain. The immediate electron acceptor for the enzyme in this species is believed to be a menaquinone. Couples the redox reaction to proton translocation (for every two electrons transferred, four hydrogen ions are translocated across the cytoplasmic membrane), and thus conserves the redox energy in a proton gradient. The protein is NADH-quinone oxidoreductase subunit B of Chlorobium luteolum (strain DSM 273 / BCRC 81028 / 2530) (Pelodictyon luteolum).